Consider the following 156-residue polypeptide: Large ribosomal subunit protein uL15 (156 aa).

Residues 25–48 (RGIGCGKGKTSGRGHKGQKARSGV) form a disordered region. Positions 34–43 (TSGRGHKGQK) are enriched in basic residues.

It belongs to the universal ribosomal protein uL15 family. In terms of assembly, part of the 50S ribosomal subunit.

Binds to the 23S rRNA. This is Large ribosomal subunit protein uL15 from Wolbachia pipientis wMel.